The primary structure comprises 257 residues: tRNA pseudouridine synthase A (257 aa).

The Nucleophile role is filled by Asp52. Tyr111 lines the substrate pocket.

This sequence belongs to the tRNA pseudouridine synthase TruA family. As to quaternary structure, homodimer.

It catalyses the reaction uridine(38/39/40) in tRNA = pseudouridine(38/39/40) in tRNA. Functionally, formation of pseudouridine at positions 38, 39 and 40 in the anticodon stem and loop of transfer RNAs. The sequence is that of tRNA pseudouridine synthase A from Cereibacter sphaeroides (strain ATCC 17025 / ATH 2.4.3) (Rhodobacter sphaeroides).